The chain runs to 199 residues: DnaJ homolog subfamily C member 5B (199 aa).

Phosphoserine is present on residues S14 and S16. The region spanning 19–84 (ALYEILGLHK…SKRNIYDKYG (66 aa)) is the J domain.

In terms of assembly, interacts with the chaperone complex consisting of HSC70 and SGTA. In terms of processing, palmitoylated.

It localises to the membrane. The polypeptide is DnaJ homolog subfamily C member 5B (DNAJC5B) (Sus scrofa (Pig)).